The chain runs to 228 residues: MTMGDKKSPTRPKRQAKPAADEGFWDCSVCTFRNSAEAFKCSICDVRKGTSTRKPRINSQLVAQQVAQQYATPPPPKKEKKEKVEKPDKEKPEKDKDISPSVTKKNTNKKTKPKSDILKDPPSEANSIQSANATTKTSETNHTSRPRLKNVDRSTAQQLAVTVGNVTVIITDFKEKTRSSSTSSSTVTSSAGSEQQNQSSSGSESTDKGSSRSSTPKGDMSAVNDESF.

Disordered stretches follow at residues 1–21, 47–157, and 172–228; these read MTMG…PAAD, RKGT…STAQ, and DFKE…DESF. A RanBP2-type zinc finger spans residues 21-50; the sequence is DEGFWDCSVCTFRNSAEAFKCSICDVRKGT. Residues 76-98 are compositionally biased toward basic and acidic residues; the sequence is PKKEKKEKVEKPDKEKPEKDKDI. Residue Lys77 forms a Glycyl lysine isopeptide (Lys-Gly) (interchain with G-Cter in SUMO2) linkage. Position 99 is a phosphoserine (Ser99). The span at 113-122 shows a compositional bias: basic and acidic residues; the sequence is PKSDILKDPP. A phosphoserine mark is found at Ser123, Ser127, and Ser130. Residues 124 to 143 show a composition bias toward polar residues; it reads EANSIQSANATTKTSETNHT. Residues 143 to 226 form an interaction with GABPB1 and FANK1 region; that stretch reads TSRPRLKNVD…KGDMSAVNDE (84 aa). Residues 179–204 are compositionally biased toward low complexity; it reads SSSTSSSTVTSSAGSEQQNQSSSGSE. Position 227 is a phosphoserine (Ser227).

Monomer. Component of repressive BCOR complex containing Polycomb group subcomplex at least composed of BCOR, PCGF1, RING1 and RNF2/RING2. Component of PCR1-like complexes. Interacts with PCGF1. Part of a PCR1-like complex that contains AUTS2, PCGF5, RNF2, CSNK2B and RYBP. Interacts with RNF2; the interaction is direct. Interacts with CBX2, YAF2, RING1 and RNF2. Interacts with ubiquitin and ubiquitinated proteins. Interacts with ubiquitinated histone H2A. Interacts with apoptin, DEDD, FADD, CASP8, CASP10, YY1 and GABPB1. Together with GABPB1 and YY1, it forms a ternary complex, probably being the bridge factor between these two transcription factors. Interacts with MDM2, and thereby inhibits ubiquitination of TP53. Identified in a ternary complex containing MDM2, TP53 and RYBP. Interacts with FANK1; may prevent the ubiquitin-mediated proteasomal degradation of FANK1. Interacts with IFT57. Monoubiquitinated. In terms of tissue distribution, expressed in embryonic stem cells.

It localises to the nucleus. It is found in the cytoplasm. Its subcellular location is the nucleoplasm. Its function is as follows. Component of a Polycomb group (PcG) multiprotein PRC1-like complex, a complex class required to maintain the transcriptionally repressive state of many genes, including Hox genes, throughout development. PcG PRC1-like complex acts via chromatin remodeling and modification of histones; it mediates monoubiquitination of histone H2A 'Lys-119', rendering chromatin heritably changed in its expressibility. Component of a PRC1-like complex that mediates monoubiquitination of histone H2A 'Lys-119' on the X chromosome and is required for normal silencing of one copy of the X chromosome in XX females. May stimulate ubiquitination of histone H2A 'Lys-119' by recruiting the complex to target sites. Inhibits ubiquitination and subsequent degradation of TP53, and thereby plays a role in regulating transcription of TP53 target genes. May also regulate the ubiquitin-mediated proteasomal degradation of other proteins like FANK1 to regulate apoptosis. May be implicated in the regulation of the transcription as a repressor of the transcriptional activity of E4TF1. May bind to DNA. May play a role in the repression of tumor growth and metastasis in breast cancer by down-regulating SRRM3. This is RING1 and YY1-binding protein (Rybp) from Mus musculus (Mouse).